The primary structure comprises 247 residues: Zinc finger protein YPR015C (247 aa).

2 consecutive C2H2-type zinc fingers follow at residues 185–207 (KQCP…YLIH) and 213–237 (FKCT…LRTH).

The polypeptide is Zinc finger protein YPR015C (Saccharomyces cerevisiae (strain ATCC 204508 / S288c) (Baker's yeast)).